Consider the following 431-residue polypeptide: Serine hydroxymethyltransferase (431 aa).

(6S)-5,6,7,8-tetrahydrofolate contacts are provided by residues L127 and 131-133 (GHL). K236 is modified (N6-(pyridoxal phosphate)lysine).

This sequence belongs to the SHMT family. In terms of assembly, homodimer. Pyridoxal 5'-phosphate is required as a cofactor.

It localises to the cytoplasm. The catalysed reaction is (6R)-5,10-methylene-5,6,7,8-tetrahydrofolate + glycine + H2O = (6S)-5,6,7,8-tetrahydrofolate + L-serine. Its pathway is one-carbon metabolism; tetrahydrofolate interconversion. The protein operates within amino-acid biosynthesis; glycine biosynthesis; glycine from L-serine: step 1/1. In terms of biological role, catalyzes the reversible interconversion of serine and glycine with tetrahydrofolate (THF) serving as the one-carbon carrier. This reaction serves as the major source of one-carbon groups required for the biosynthesis of purines, thymidylate, methionine, and other important biomolecules. Also exhibits THF-independent aldolase activity toward beta-hydroxyamino acids, producing glycine and aldehydes, via a retro-aldol mechanism. The sequence is that of Serine hydroxymethyltransferase from Granulibacter bethesdensis (strain ATCC BAA-1260 / CGDNIH1).